The chain runs to 178 residues: uncharacterized protein (178 aa).

Helical transmembrane passes span 3–23 (IPIILTLMLFSLGFIFGFISI), 56–76 (IFLMLAGSITFGLSTFINLIF), 101–121 (LILPHGIFEISAMLISAVAGF), and 150–170 (LSLISIILIVIAAFIEVYITP).

The protein to M.jannaschii MJ0706 and Synechocystis PCC 6803 slr1478.

It localises to the cell membrane. This is an uncharacterized protein from Methanocaldococcus jannaschii (strain ATCC 43067 / DSM 2661 / JAL-1 / JCM 10045 / NBRC 100440) (Methanococcus jannaschii).